The following is a 234-amino-acid chain: Probable septum site-determining protein MinC (234 aa).

Belongs to the MinC family. As to quaternary structure, interacts with MinD and FtsZ.

Its function is as follows. Cell division inhibitor that blocks the formation of polar Z ring septums. Rapidly oscillates between the poles of the cell to destabilize FtsZ filaments that have formed before they mature into polar Z rings. Prevents FtsZ polymerization. The protein is Probable septum site-determining protein MinC of Buchnera aphidicola subsp. Baizongia pistaciae (strain Bp).